Consider the following 577-residue polypeptide: Arginine--tRNA ligase (577 aa).

Residues 122–132 (PNVAKEMHVGH) carry the 'HIGH' region motif.

Belongs to the class-I aminoacyl-tRNA synthetase family. As to quaternary structure, monomer.

Its subcellular location is the cytoplasm. It catalyses the reaction tRNA(Arg) + L-arginine + ATP = L-arginyl-tRNA(Arg) + AMP + diphosphate. In Salmonella choleraesuis (strain SC-B67), this protein is Arginine--tRNA ligase.